A 369-amino-acid chain; its full sequence is Chaperone protein DnaJ (369 aa).

Residues 3–67 enclose the J domain; it reads DHYEVLGVER…QQRQQYDRGG (65 aa). The CR-type zinc-finger motif lies at 123 to 205; sequence GAHRDLEVDT…CQGQGRVRAR (83 aa). The Zn(2+) site is built by Cys-136, Cys-139, Cys-153, Cys-156, Cys-179, Cys-182, Cys-193, and Cys-196. CXXCXGXG motif repeat units follow at residues 136–143, 153–160, 179–186, and 193–200; these read CETCDGSC, CDICHGTG, CGSCRGYG, and CVTCQGQG.

The protein belongs to the DnaJ family. Homodimer. The cofactor is Zn(2+).

Its subcellular location is the cytoplasm. Its function is as follows. Participates actively in the response to hyperosmotic and heat shock by preventing the aggregation of stress-denatured proteins and by disaggregating proteins, also in an autonomous, DnaK-independent fashion. Unfolded proteins bind initially to DnaJ; upon interaction with the DnaJ-bound protein, DnaK hydrolyzes its bound ATP, resulting in the formation of a stable complex. GrpE releases ADP from DnaK; ATP binding to DnaK triggers the release of the substrate protein, thus completing the reaction cycle. Several rounds of ATP-dependent interactions between DnaJ, DnaK and GrpE are required for fully efficient folding. Also involved, together with DnaK and GrpE, in the DNA replication of plasmids through activation of initiation proteins. This Leifsonia xyli subsp. xyli (strain CTCB07) protein is Chaperone protein DnaJ.